A 146-amino-acid polypeptide reads, in one-letter code: Protein JTB (146 aa).

A signal peptide spans 1 to 30; sequence MLAGAGRPGLPQGRHLCWLLCAFTLKLCQA. Residues 31-105 lie on the Extracellular side of the membrane; the sequence is EAPVQEEKLS…CRSALMEQRL (75 aa). The helical transmembrane segment at 106–126 threads the bilayer; sequence FWKFEGAVVCVALIFACLVII. At 127–146 the chain is on the cytoplasmic side; that stretch reads RQRQLDRKALEKVRKQIESI.

It belongs to the JTB family. In terms of assembly, interacts with AURKA, AURKB, BIRC5 and INCENP. May be a component of the CPC at least composed of BIRC5/survivin, CDCA8/borealin, INCENP and AURKB/Aurora-B. As to expression, ubiquitous. Expressed in all normal human tissues studied but overexpressed or underexpressed in many of their malignant counterparts.

The protein resides in the membrane. It localises to the mitochondrion. It is found in the cytoplasm. Its subcellular location is the cytoskeleton. The protein localises to the microtubule organizing center. The protein resides in the centrosome. It localises to the spindle. Its function is as follows. Required for normal cytokinesis during mitosis. Plays a role in the regulation of cell proliferation. May be a component of the chromosomal passenger complex (CPC), a complex that acts as a key regulator of mitosis. The CPC complex has essential functions at the centromere in ensuring correct chromosome alignment and segregation and is required for chromatin-induced microtubule stabilization and spindle assembly. Increases AURKB activity. Inhibits apoptosis induced by TGFB1. Overexpression induces swelling of mitochondria and reduces mitochondrial membrane potential. This Homo sapiens (Human) protein is Protein JTB (JTB).